Reading from the N-terminus, the 394-residue chain is MAIMSDLPRDLLAEILSRVPLASLRSVRFTCKKWNDLSKDRSFLKKQIVEAKKKQLKSKEFEVIMMRNFRVYLTSVDLHNDVNPSFTPKGTLTSFSDDANQHQVDNVSSVFHCDGLLLCITKDLNFRLVVWNPYFGQTRWIQPRNSYHIKDIYAIGYDENKNHKILRLKDQYYDYDSHPRARICEFELYSFESNSWKVVLDVSPDWYIHSYHRGLSVKGNTYWYATEKHGYVNFLICFDFTTEKFGPRLPLPFNATESFTYDDVVTLSSVGEEQLALLFQSDATLMMEIWVTSKVDPTEVLWNKLFLAVDHDMIEFDYELKFVADAGSFFIDQKKNVVVVFDKDMNEHTHRGMAYIVGKNGYFKRVDIGEEAYTSCFPLVCSYVPSSVQIRQLT.

The F-box domain occupies 1–47; it reads MAIMSDLPRDLLAEILSRVPLASLRSVRFTCKKWNDLSKDRSFLKKQ.

The polypeptide is F-box protein At2g17830 (Arabidopsis thaliana (Mouse-ear cress)).